The sequence spans 220 residues: Putative F-box protein At3g20705 (220 aa).

The region spanning 1 to 51 (MMMMSNLPNDLVEEILSRVTVTFMRTVRSICKKWNALTKDRSFTNKYIRNI) is the F-box domain.

The polypeptide is Putative F-box protein At3g20705 (Arabidopsis thaliana (Mouse-ear cress)).